The sequence spans 200 residues: Dephospho-CoA kinase (200 aa).

A DPCK domain is found at 3–200 (KVGLTGGIGS…EELQRRLHSR (198 aa)). 11-16 (GSGKSS) serves as a coordination point for ATP.

Belongs to the CoaE family.

It is found in the cytoplasm. It catalyses the reaction 3'-dephospho-CoA + ATP = ADP + CoA + H(+). It participates in cofactor biosynthesis; coenzyme A biosynthesis; CoA from (R)-pantothenate: step 5/5. Its function is as follows. Catalyzes the phosphorylation of the 3'-hydroxyl group of dephosphocoenzyme A to form coenzyme A. The protein is Dephospho-CoA kinase of Thermobifida fusca (strain YX).